The chain runs to 355 residues: Thiamine thiazole synthase, chloroplastic (355 aa).

A chloroplast-targeting transit peptide spans 1-42; sequence MAAMATTASSLLKTSFAGARLPAAARNPTVSVAPRTGGAICN. Residues Ala-96, 116-117, Gly-124, and Val-189 contribute to the substrate site; that span reads EQ. Cys-218 is subject to 2,3-didehydroalanine (Cys). Substrate-binding positions include Asp-220, His-235, Met-287, and 297 to 299; that span reads RMG.

It belongs to the THI4 family. Homooctamer. Requires Fe cation as cofactor. During the catalytic reaction, a sulfide is transferred from Cys-218 to a reaction intermediate, generating a dehydroalanine residue.

It is found in the plastid. The protein resides in the chloroplast. The catalysed reaction is [ADP-thiazole synthase]-L-cysteine + glycine + NAD(+) = [ADP-thiazole synthase]-dehydroalanine + ADP-5-ethyl-4-methylthiazole-2-carboxylate + nicotinamide + 3 H2O + 2 H(+). Functionally, involved in biosynthesis of the thiamine precursor thiazole. Catalyzes the conversion of NAD and glycine to adenosine diphosphate 5-(2-hydroxyethyl)-4-methylthiazole-2-carboxylic acid (ADT), an adenylated thiazole intermediate. The reaction includes an iron-dependent sulfide transfer from a conserved cysteine residue of the protein to a thiazole intermediate. The enzyme can only undergo a single turnover, which suggests it is a suicide enzyme. May have additional roles in adaptation to various stress conditions and in DNA damage tolerance. Required fot thiamine accumulation and disease resistance toward the bacterial pathogen Xanthomonas oryzae pv oryzae (Xoo) and the fungal pathogen Magnaporthe oryzae. During infection by Xoo, functions positively in the defense pathway initiated by the resistance genes XA3 and XA26 by promoting thiamine synthesis. May function upstream of the defense-related proteins peroxidases, phenylalanine ammonia-lyases and pathogenesis-related proteins. Its function is as follows. (Microbial infection) During infection by Xanthomonas oryzae pv oryzae (Xoo), THI1 interacts with the type III effector virulence factor xadA from Xoo, which is an adhesin-like outer membrane protein. This probably attenuates the function of THI1 in defense response. The chain is Thiamine thiazole synthase, chloroplastic from Oryza sativa subsp. japonica (Rice).